The primary structure comprises 283 residues: Phosphatidylserine decarboxylase proenzyme (283 aa).

Residues aspartate 96, histidine 152, and serine 250 each act as charge relay system; for autoendoproteolytic cleavage activity in the active site. The Schiff-base intermediate with substrate; via pyruvic acid; for decarboxylase activity role is filled by serine 250. At serine 250 the chain carries Pyruvic acid (Ser); by autocatalysis.

The protein belongs to the phosphatidylserine decarboxylase family. PSD-B subfamily. Prokaryotic type I sub-subfamily. In terms of assembly, heterodimer of a large membrane-associated beta subunit and a small pyruvoyl-containing alpha subunit. Requires pyruvate as cofactor. Post-translationally, is synthesized initially as an inactive proenzyme. Formation of the active enzyme involves a self-maturation process in which the active site pyruvoyl group is generated from an internal serine residue via an autocatalytic post-translational modification. Two non-identical subunits are generated from the proenzyme in this reaction, and the pyruvate is formed at the N-terminus of the alpha chain, which is derived from the carboxyl end of the proenzyme. The autoendoproteolytic cleavage occurs by a canonical serine protease mechanism, in which the side chain hydroxyl group of the serine supplies its oxygen atom to form the C-terminus of the beta chain, while the remainder of the serine residue undergoes an oxidative deamination to produce ammonia and the pyruvoyl prosthetic group on the alpha chain. During this reaction, the Ser that is part of the protease active site of the proenzyme becomes the pyruvoyl prosthetic group, which constitutes an essential element of the active site of the mature decarboxylase.

It is found in the cell membrane. It carries out the reaction a 1,2-diacyl-sn-glycero-3-phospho-L-serine + H(+) = a 1,2-diacyl-sn-glycero-3-phosphoethanolamine + CO2. The protein operates within phospholipid metabolism; phosphatidylethanolamine biosynthesis; phosphatidylethanolamine from CDP-diacylglycerol: step 2/2. Functionally, catalyzes the formation of phosphatidylethanolamine (PtdEtn) from phosphatidylserine (PtdSer). This is Phosphatidylserine decarboxylase proenzyme from Acinetobacter baumannii (strain ACICU).